The following is a 208-amino-acid chain: FMN-dependent NADH:quinone oxidoreductase (208 aa).

Residues Ser10, 16 to 18 (SRS), and 96 to 99 (MYNF) each bind FMN.

This sequence belongs to the azoreductase type 1 family. Homodimer. FMN serves as cofactor.

It carries out the reaction 2 a quinone + NADH + H(+) = 2 a 1,4-benzosemiquinone + NAD(+). The catalysed reaction is N,N-dimethyl-1,4-phenylenediamine + anthranilate + 2 NAD(+) = 2-(4-dimethylaminophenyl)diazenylbenzoate + 2 NADH + 2 H(+). In terms of biological role, quinone reductase that provides resistance to thiol-specific stress caused by electrophilic quinones. Its function is as follows. Also exhibits azoreductase activity. Catalyzes the reductive cleavage of the azo bond in aromatic azo compounds to the corresponding amines. In Xanthobacter autotrophicus (strain ATCC BAA-1158 / Py2), this protein is FMN-dependent NADH:quinone oxidoreductase.